The primary structure comprises 228 residues: Urease subunit gamma/beta (228 aa).

The segment at 1–101 is urease gamma; it reads MQLTERERDK…LVTVHDPIRG (101 aa). The segment at 102–228 is urease beta; sequence AASRRVAGEY…ARAAGFGGAQ (127 aa).

This sequence in the N-terminal section; belongs to the urease gamma subunit family. The protein in the C-terminal section; belongs to the urease beta subunit family. As to quaternary structure, heterohexamer of 3 UreC (alpha) and 3 UreAB (gamma/beta) subunits.

It is found in the cytoplasm. It carries out the reaction urea + 2 H2O + H(+) = hydrogencarbonate + 2 NH4(+). It functions in the pathway nitrogen metabolism; urea degradation; CO(2) and NH(3) from urea (urease route): step 1/1. The protein is Urease subunit gamma/beta of Deinococcus radiodurans (strain ATCC 13939 / DSM 20539 / JCM 16871 / CCUG 27074 / LMG 4051 / NBRC 15346 / NCIMB 9279 / VKM B-1422 / R1).